The following is a 79-amino-acid chain: FPIPLPFCWLCRTLIKRIQAVVPKGVLLKAVAQVCHVVPLPVGGICQCLAERYIVICLNMLLDRTLPQLVCGLVLRCSS.

The region spanning 4–79 (PLPFCWLCRT…VCGLVLRCSS (76 aa)) is the Saposin B-type domain. 3 disulfide bridges follow: cysteine 8/cysteine 77, cysteine 11/cysteine 71, and cysteine 35/cysteine 46.

In terms of assembly, homodimer; disulfide-linked.

The protein localises to the secreted. It is found in the extracellular space. Its subcellular location is the surface film. Pulmonary surfactant-associated proteins promote alveolar stability by lowering the surface tension at the air-liquid interface in the peripheral air spaces. SP-B increases the collapse pressure of palmitic acid to nearly 70 millinewtons per meter. The polypeptide is Pulmonary surfactant-associated protein B (SFTPB) (Sus scrofa (Pig)).